The chain runs to 252 residues: uncharacterized protein (252 aa).

The ABC transporter domain occupies 13–247 (ITLENVNKWY…PKSERTRAFL (235 aa)). ATP is bound at residue 45 to 52 (GPSGSGKS).

The protein belongs to the ABC transporter superfamily.

It localises to the cell inner membrane. Probably part of a binding-protein-dependent transport system YdhWXYZ for an amino acid. Probably responsible for energy coupling to the transport system. This is an uncharacterized protein from Escherichia coli (strain K12).